The sequence spans 1382 residues: Eukaryotic translation initiation factor 3 subunit A (1382 aa).

K68 bears the N6-acetyllysine mark. Residues 82–120 are a coiled coil; sequence NIKSLEDVVRAYLKMAEEKTEAAKEESQQMVLDIEDLDN. Positions 315–498 constitute a PCI domain; it reads MQRMSTRVLL…RTLSFGSDLN (184 aa). S492 and S584 each carry phosphoserine. The interaction with EIF3B stretch occupies residues 664–835; it reads LDPDFIMAKQ…REERERAERA (172 aa). 2 disordered regions span residues 810–844 and 866–1382; these read KEEE…LREY and EERE…TVRR. Composition is skewed to basic and acidic residues over residues 866–1165, 1177–1328, and 1336–1371; these read EERE…DDSR, GWRE…DPPR, and SRDR…TKNE. Phosphoserine occurs at positions 881, 882, and 895. Residues 925–934 form repeat 1; that stretch reads DEDRSHRRDE. A 25 X 10 AA approximate tandem repeats of [DE]-[DE]-[DE]-R-[SEVGFPILV]-[HPSN]-[RSW]-[RL]-[DRGTIHN]-[EPMANLGDT] region spans residues 925 to 1172; the sequence is DEDRSHRRDE…DSRPGPWRPL (248 aa). Residues 935 to 942 form a 2; truncated repeat; it reads ERPRRLGD. 20 tandem repeats follow at residues 943–952, 953–962, 963–972, 973–982, 983–992, 993–1002, 1003–1012, 1013–1022, 1023–1032, 1033–1042, 1043–1052, 1054–1063, 1064–1073, 1074–1083, 1084–1093, 1094–1103, 1104–1113, 1114–1123, 1124–1133, and 1134–1143. The residue at position 949 (S949) is a Phosphoserine. S1028 carries the phosphoserine modification. The 23; truncated repeat unit spans residues 1144-1152; that stretch reads DDDRLSRRA. Repeat 24 spans residues 1153 to 1162; it reads DDDRFPRRGD. The 25; approximate repeat unit spans residues 1163–1172; it reads DSRPGPWRPL. A phosphoserine mark is found at S1188, S1198, S1262, S1336, and S1364.

As to quaternary structure, interacts with EIF4G1. Component of the eukaryotic translation initiation factor 3 (eIF-3) complex, which is composed of 13 subunits: EIF3A, EIF3B, EIF3C, EIF3D, EIF3E, EIF3F, EIF3G, EIF3H, EIF3I, EIF3J, EIF3K, EIF3L and EIF3M. The eIF-3 complex appears to include 3 stable modules: module A is composed of EIF3A, EIF3B, EIF3G and EIF3I; module B is composed of EIF3F, EIF3H, and EIF3M; and module C is composed of EIF3C, EIF3D, EIF3E, EIF3L and EIF3K. EIF3C of module C binds EIF3B of module A and EIF3H of module B, thereby linking the three modules. EIF3J is a labile subunit that binds to the eIF-3 complex via EIF3B. The eIF-3 complex interacts with RPS6KB1 under conditions of nutrient depletion. Mitogenic stimulation leads to binding and activation of a complex composed of MTOR and RPTOR, leading to phosphorylation and release of RPS6KB1 and binding of EIF4B to eIF-3. Also interacts with KRT7 and PIWIL2. Post-translationally, phosphorylated. Phosphorylation is enhanced upon serum stimulation.

It is found in the cytoplasm. Its function is as follows. RNA-binding component of the eukaryotic translation initiation factor 3 (eIF-3) complex, which is required for several steps in the initiation of protein synthesis. The eIF-3 complex associates with the 40S ribosome and facilitates the recruitment of eIF-1, eIF-1A, eIF-2:GTP:methionyl-tRNAi and eIF-5 to form the 43S pre-initiation complex (43S PIC). The eIF-3 complex stimulates mRNA recruitment to the 43S PIC and scanning of the mRNA for AUG recognition. The eIF-3 complex is also required for disassembly and recycling of post-termination ribosomal complexes and subsequently prevents premature joining of the 40S and 60S ribosomal subunits prior to initiation. The eIF-3 complex specifically targets and initiates translation of a subset of mRNAs involved in cell proliferation, including cell cycling, differentiation and apoptosis, and uses different modes of RNA stem-loop binding to exert either translational activation or repression. In terms of biological role, (Microbial infection) Essential for the initiation of translation on type-1 viral ribosomal entry sites (IRESs), like for HCV, PV, EV71 or BEV translation. Functionally, (Microbial infection) In case of FCV infection, plays a role in the ribosomal termination-reinitiation event leading to the translation of VP2. The protein is Eukaryotic translation initiation factor 3 subunit A of Homo sapiens (Human).